The sequence spans 515 residues: Bifunctional purine biosynthesis protein PurH (515 aa).

One can recognise an MGS-like domain in the interval 1-145 (MTKRALISVS…KNHASVTVVV (145 aa)).

This sequence belongs to the PurH family.

It carries out the reaction (6R)-10-formyltetrahydrofolate + 5-amino-1-(5-phospho-beta-D-ribosyl)imidazole-4-carboxamide = 5-formamido-1-(5-phospho-D-ribosyl)imidazole-4-carboxamide + (6S)-5,6,7,8-tetrahydrofolate. It catalyses the reaction IMP + H2O = 5-formamido-1-(5-phospho-D-ribosyl)imidazole-4-carboxamide. The protein operates within purine metabolism; IMP biosynthesis via de novo pathway; 5-formamido-1-(5-phospho-D-ribosyl)imidazole-4-carboxamide from 5-amino-1-(5-phospho-D-ribosyl)imidazole-4-carboxamide (10-formyl THF route): step 1/1. It participates in purine metabolism; IMP biosynthesis via de novo pathway; IMP from 5-formamido-1-(5-phospho-D-ribosyl)imidazole-4-carboxamide: step 1/1. This chain is Bifunctional purine biosynthesis protein PurH, found in Streptococcus suis (strain 98HAH33).